Reading from the N-terminus, the 859-residue chain is MYAGFYVAVHPWLETQSLHKVGHTGNLAARLHDGSYTTCFTDEWKYCFTLETPTKKDAQKIEAGVLYCAQFFRVKNKELLCLLPEKIKQLAEDVAKCLDISYTLCDSPTYEMNDSTIVVEPSLPSDPLISKEKLRHLVIIPVEDEDHFADDVLFFSTDETRTAIEDRLYQKEAANMGYQELQRSGRAILQMACRCGKTRVAYLILSNYLQGKVLYLVPGLSLLRQTLEKLYLYGISLKNVLLVGSDQTRIVLNHDNIEMTTNPVFIAKRIQEASSLLVIATYQSSTLLVDDFDLIISDECHRICGEWEIRPFTHVLLNFKKGHRLFLTATPRYDTPLSMKNRDLFGGVAFRYYLREGIEAGYVNDFELQMVAAPKLAHQLSNREETTKQIIVKQIIMALAYLKTNITSPKMLVFTRDIKQAKELYAELVDLGVYALIAHSTLPRQVILKTFTEFCSSKEPVILLNCRLFQEGVEVPELNAVFFAAPRHSPRDIIQSICRPLNKQVQKPHATIFLPLEVNTENVCLDKFSSIIPFADALASEDPRFYEHLLNPSEVAYPINWIGAHGSVSELLHLARHAIRYGTQGKIDRLTRSERLPWKAAFAELKRTVEICCRYPKINDGFHFGGATLRFDTWYKWVIKSYLQYKNKEPSSLEPYQVSDLESLQDWTTRGVGGPYPWEESMAFLETWLAQNKGELVAIDIHQGGWIGLDATPMERLSGVLTTVSQRDGRSYGKNKKLRPKKGFMIPPQQAEDLDRIFGKHNLKWRKDRVNGFLKEDEHGNYTGEPTCIQEAYRTFKEYVKTNPEYIEKYWPGYAKGKHKHQELPHIWESGLAPPRYKAFKDGNKQLIQRSPKKKDVKN.

Residues 178-349 form the Helicase ATP-binding domain; that stretch reads YQELQRSGRA…KNRDLFGGVA (172 aa). Position 191 to 198 (191 to 198) interacts with ATP; the sequence is MACRCGKT. The DEAH box signature appears at 298–301; it reads DECH. Residues 394–553 enclose the Helicase C-terminal domain; it reads QIIMALAYLK…RFYEHLLNPS (160 aa).

Belongs to the asfivirus helicase A859L family.

This chain is Probable helicase A859L, found in Ornithodoros (relapsing fever ticks).